The chain runs to 411 residues: Arginine deiminase (411 aa).

Cys-401 acts as the Amidino-cysteine intermediate in catalysis.

The protein belongs to the arginine deiminase family. Glycosylated.

It localises to the cytoplasm. It catalyses the reaction L-arginine + H2O = L-citrulline + NH4(+). It functions in the pathway amino-acid degradation; L-arginine degradation via ADI pathway; carbamoyl phosphate from L-arginine: step 1/2. In Streptococcus pyogenes serotype M3 (strain ATCC BAA-595 / MGAS315), this protein is Arginine deiminase.